The following is a 186-amino-acid chain: Protein FAM9B (186 aa).

Residues 1 to 93 (MAAWGKKHAG…KHALRKKQLK (93 aa)) form a disordered region. Composition is skewed to basic and acidic residues over residues 10 to 27 (GKDP…FTET) and 34 to 58 (DEHG…KPED). Residues 66-93 (KRKRMKMDKTCSKTKNKSKHALRKKQLK) show a composition bias toward basic residues.

This sequence belongs to the XLR/SYCP3 family. In terms of tissue distribution, expressed in testis and ovary (at protein level).

It is found in the nucleus. Its subcellular location is the cytoplasm. It localises to the chromosome. May play a role in meiosis. In Homo sapiens (Human), this protein is Protein FAM9B.